The chain runs to 311 residues: Endosome-associated-trafficking regulator 1 (311 aa).

Residues 167–278 (RGNAENGTKN…KSENERLRLG (112 aa)) are a coiled coil.

This sequence belongs to the ENTR1 family.

The protein resides in the cytoplasm. Its subcellular location is the early endosome. The protein localises to the endosome. It is found in the recycling endosome. It localises to the midbody. The protein resides in the cytoskeleton. Its subcellular location is the microtubule organizing center. The protein localises to the centrosome. It is found in the cilium basal body. In terms of biological role, endosome-associated protein that plays a role in membrane receptor sorting, cytokinesis and ciliogenesis. The sequence is that of Endosome-associated-trafficking regulator 1 from Danio rerio (Zebrafish).